Consider the following 154-residue polypeptide: Aspartate carbamoyltransferase regulatory chain (154 aa).

Residues Cys-109, Cys-114, Cys-138, and Cys-141 each contribute to the Zn(2+) site.

The protein belongs to the PyrI family. In terms of assembly, contains catalytic and regulatory chains. Requires Zn(2+) as cofactor.

Its function is as follows. Involved in allosteric regulation of aspartate carbamoyltransferase. The polypeptide is Aspartate carbamoyltransferase regulatory chain (Aliivibrio fischeri (strain ATCC 700601 / ES114) (Vibrio fischeri)).